Consider the following 328-residue polypeptide: E3 ubiquitin-protein ligase SINA-like 5 (328 aa).

The interval 1-77 (MARSGGNDGH…GSPKSSQPVK (77 aa)) is disordered. 2 stretches are compositionally biased toward acidic residues: residues 10 to 20 (HEEELDPELFE) and 27 to 62 (GYED…ENVT). Over residues 63–77 (TDEQSGSPKSSQPVK) the composition is skewed to polar residues. The RING-type; degenerate zinc finger occupies 86–122 (CPTCCEPLKRPIYQCSNGHLACSSCCQKLNKKCSFCR). The SBD stretch occupies residues 136–324 (VIEASIVPCP…MQICIAYGYK (189 aa)). The segment at 139–197 (ASIVPCPNAKHGCKETTTYCNQSSHEKVCKFVRCSCPVSNCNYVSSYSNLKSHACSTAH) adopts an SIAH-type; degenerate zinc-finger fold. Zn(2+) is bound by residues Cys144, Cys151, His163, Cys167, Cys174, Cys179, His191, and His197.

The protein belongs to the SINA (Seven in absentia) family.

The catalysed reaction is S-ubiquitinyl-[E2 ubiquitin-conjugating enzyme]-L-cysteine + [acceptor protein]-L-lysine = [E2 ubiquitin-conjugating enzyme]-L-cysteine + N(6)-ubiquitinyl-[acceptor protein]-L-lysine.. It participates in protein modification; protein ubiquitination. E3 ubiquitin-protein ligase that mediates ubiquitination and subsequent proteasomal degradation of target proteins. E3 ubiquitin ligases accept ubiquitin from an E2 ubiquitin-conjugating enzyme in the form of a thioester and then directly transfers the ubiquitin to targeted substrates. It probably triggers the ubiquitin-mediated degradation of different substrates. The chain is E3 ubiquitin-protein ligase SINA-like 5 from Arabidopsis thaliana (Mouse-ear cress).